Reading from the N-terminus, the 192-residue chain is E3 ubiquitin-protein ligase RNF185 (192 aa).

The span at 1-13 (MASKGPSASASTE) shows a compositional bias: polar residues. The interval 1–30 (MASKGPSASASTENSNAGGPSGSSNGTGES) is disordered. Residues 1-130 (MASKGPSASA…GGFQGFGFGD (130 aa)) are Cytoplasmic-facing. The span at 14 to 27 (NSNAGGPSGSSNGT) shows a compositional bias: low complexity. Residues 29–80 (ESGGQDSTFECNICLDTAKDAVISLCGHLFCWPCLHQWLETRPNRQVCPVCK) form a required for ubiquitin ligase activity and protection against ER stress-induced cell death region. Residues 39–80 (CNICLDTAKDAVISLCGHLFCWPCLHQWLETRPNRQVCPVCK) form an RING-type zinc finger. The tract at residues 90–123 (PLYGRGSTGQQDPREKTPPRPQGQRPEPENRGGF) is disordered. A helical membrane pass occupies residues 131–151 (GGFQMSFGIGAFPFGIFATAF). The Mitochondrial intermembrane segment spans residues 152–171 (NINDGRPPPAVPGTPQYVDE). A helical transmembrane segment spans residues 172–192 (QFLSRLFLFVALVIMFWLLIA).

Interacts with ATG5 and BNIP1. Ubiquitously expressed with high expression in testis.

The protein resides in the mitochondrion outer membrane. Its subcellular location is the endoplasmic reticulum membrane. It carries out the reaction S-ubiquitinyl-[E2 ubiquitin-conjugating enzyme]-L-cysteine + [acceptor protein]-L-lysine = [E2 ubiquitin-conjugating enzyme]-L-cysteine + N(6)-ubiquitinyl-[acceptor protein]-L-lysine.. The protein operates within protein modification; protein ubiquitination. In terms of biological role, E3 ubiquitin-protein ligase that regulates selective mitochondrial autophagy by mediating 'Lys-63'-linked polyubiquitination of BNIP1. Acts in the endoplasmic reticulum (ER)-associated degradation (ERAD) pathway, which targets misfolded proteins that accumulate in the endoplasmic reticulum (ER) for ubiquitination and subsequent proteasome-mediated degradation. Protects cells from ER stress-induced apoptosis. Responsible for the cotranslational ubiquitination and degradation of CFTR in the ERAD pathway. Also acts as a regulator of the innate antiviral response by catalyzing 'Lys-27'-linked polyubiquitination of CGAS, thereby promoting CGAS cyclic GMP-AMP synthase activity. Preferentially associates with the E2 enzymes UBE2J1 and UBE2J2. This is E3 ubiquitin-protein ligase RNF185 (Rnf185) from Mus musculus (Mouse).